A 357-amino-acid polypeptide reads, in one-letter code: Metacaspase-3 (357 aa).

Histidine 168 is a catalytic residue. Residues aspartate 183, aspartate 199, and aspartate 200 each contribute to the Ca(2+) site. Cysteine 223 is an active-site residue. Residue aspartate 230 participates in Ca(2+) binding.

The protein belongs to the peptidase C14B family.

It is found in the recycling endosome. With respect to regulation, activated by Ca(2+). Functionally, cysteine protease that cleaves specifically after arginine or lysine residues. In the bloodstream form, may cleave inactive metacaspase-4 MCA4 prior to MCA4 secretion. In Trypanosoma brucei brucei, this protein is Metacaspase-3.